A 303-amino-acid chain; its full sequence is N-acetyl-D-glucosamine kinase (303 aa).

ATP-binding positions include 4–11 (GFDIGGTK) and 133–140 (GVGGGLVL). Residues His157, Cys177, Cys179, and Cys184 each coordinate Zn(2+).

This sequence belongs to the ROK (NagC/XylR) family. NagK subfamily.

The catalysed reaction is N-acetyl-D-glucosamine + ATP = N-acetyl-D-glucosamine 6-phosphate + ADP + H(+). Its pathway is cell wall biogenesis; peptidoglycan recycling. Functionally, catalyzes the phosphorylation of N-acetyl-D-glucosamine (GlcNAc) derived from cell-wall degradation, yielding GlcNAc-6-P. The sequence is that of N-acetyl-D-glucosamine kinase from Salmonella arizonae (strain ATCC BAA-731 / CDC346-86 / RSK2980).